The primary structure comprises 189 residues: GTP cyclohydrolase 1 (189 aa).

Residues cysteine 79, histidine 82, and cysteine 150 each coordinate Zn(2+).

The protein belongs to the GTP cyclohydrolase I family. As to quaternary structure, homomer.

It catalyses the reaction GTP + H2O = 7,8-dihydroneopterin 3'-triphosphate + formate + H(+). It functions in the pathway cofactor biosynthesis; 7,8-dihydroneopterin triphosphate biosynthesis; 7,8-dihydroneopterin triphosphate from GTP: step 1/1. The sequence is that of GTP cyclohydrolase 1 from Rickettsia africae (strain ESF-5).